A 407-amino-acid polypeptide reads, in one-letter code: Substance-P receptor (407 aa).

The Extracellular portion of the chain corresponds to 1-31 (MDNVLPMDSDLFPNISTNTSESNQFVQPTWQ). Residues Asn14 and Asn18 are each glycosylated (N-linked (GlcNAc...) asparagine). Residues 32 to 54 (IVLWAAAYTVIVVTSVVGNVVVI) traverse the membrane as a helical segment. The Cytoplasmic segment spans residues 55–64 (WIILAHKRMR). A helical membrane pass occupies residues 65 to 86 (TVTNYFLVNLAFAEACMAAFNT). Residues 87-106 (VVNFTYAVHNVWYYGLFYCK) are Extracellular-facing. Cys105 and Cys180 are oxidised to a cystine. The chain crosses the membrane as a helical span at residues 107-128 (FHNFFPIAALFASIYSMTAVAF). The Cytoplasmic segment spans residues 129 to 148 (DRYMAIIHPLQPRLSATATK). Residues 149-169 (VVIFVIWVLALLLAFPQGYYS) traverse the membrane as a helical segment. Topologically, residues 170 to 194 (TTETMPSRVVCMIEWPEHPNRTYEK) are extracellular. A helical transmembrane segment spans residues 195 to 219 (AYHICVTVLIYFLPLLVIGYAYTVV). Residues 220–248 (GITLWASEIPGDSSDRYHEQVSAKRKVVK) are Cytoplasmic-facing. A helical transmembrane segment spans residues 249-270 (MMIVVVCTFAICWLPFHVFFLL). Residues 271-283 (PYINPDLYLKKFI) lie on the Extracellular side of the membrane. Residues 284–308 (QQVYLASMWLAMSSTMYNPIIYCCL) traverse the membrane as a helical segment. Residues 309–407 (NDRFRLGFKH…SSSFYSNMLA (99 aa)) lie on the Cytoplasmic side of the membrane. A lipid anchor (S-palmitoyl cysteine) is attached at Cys322. The disordered stretch occupies residues 362-407 (VGAHEEEPEEGPKATPSSLDLTSNGSSRSNSKTMTESSSFYSNMLA). Positions 376 to 407 (TPSSLDLTSNGSSRSNSKTMTESSSFYSNMLA) are enriched in polar residues.

The protein belongs to the G-protein coupled receptor 1 family. Interacts with ARRB1.

The protein resides in the cell membrane. Functionally, this is a receptor for the tachykinin neuropeptide substance P. It is probably associated with G proteins that activate a phosphatidylinositol-calcium second messenger system. The rank order of affinity of this receptor to tachykinins is: substance P &gt; substance K &gt; neuromedin-K. The polypeptide is Substance-P receptor (Tacr1) (Rattus norvegicus (Rat)).